A 409-amino-acid polypeptide reads, in one-letter code: MSKLNPYFGEYGGMYVPQILMPALKQLETAFIEAQEDESFQQEFTELLKNYAGRPTALTLTRNLSPNPLTKIYLKREDLLHGGAHKTNQVLGQALLAKRMGKKEIIAETGAGQHGVATALACALLGLKCKVYMGAKDVERQSPNVFRMKLMGAEVIPVTSGSATLKDACNEAMRDWSGSYDKAHYLLGTAAGPHPFPTIVREFQRMIGEETKSQILEREGRLPDAVIACVGGGSNAIGMFADFIDEEEVALIGVEPAGKGIDTPMHGAPLKHGKTGIFFGMKAPLMQDSEGQIEESYSVSAGLDFPSVGPQHAHLAATGRATYESATDDEALEAFQLLARSEGIIPALESAHALAYAVKLAKEATKETILVVNLSGRGDKDIFTVADILEQQKVEQQEAEQQQTNNQNN.

Position 86 is an N6-(pyridoxal phosphate)lysine (K86).

The protein belongs to the TrpB family. As to quaternary structure, tetramer of two alpha and two beta chains. The cofactor is pyridoxal 5'-phosphate.

It catalyses the reaction (1S,2R)-1-C-(indol-3-yl)glycerol 3-phosphate + L-serine = D-glyceraldehyde 3-phosphate + L-tryptophan + H2O. Its pathway is amino-acid biosynthesis; L-tryptophan biosynthesis; L-tryptophan from chorismate: step 5/5. Functionally, the beta subunit is responsible for the synthesis of L-tryptophan from indole and L-serine. This chain is Tryptophan synthase beta chain, found in Shewanella pealeana (strain ATCC 700345 / ANG-SQ1).